The sequence spans 62 residues: uncharacterized protein (62 aa).

Over residues 1–13 (MGESKSPQESSSE) the composition is skewed to polar residues. A disordered region spans residues 1-62 (MGESKSPQES…SRREFRRKSG (62 aa)). Basic and acidic residues predominate over residues 14–28 (GETKRKFREALDRKM).

This is an uncharacterized protein from Mycobacterium tuberculosis (strain ATCC 25618 / H37Rv).